Here is a 584-residue protein sequence, read N- to C-terminus: Transcription factor COE1 (584 aa).

Methionine 1 carries the N-acetylmethionine modification. Residues 1-14 (MFGIQESIQRSGSS) show a composition bias toward polar residues. The interval 1–21 (MFGIQESIQRSGSSMKEEPLG) is disordered. Residue lysine 16 forms a Glycyl lysine isopeptide (Lys-Gly) (interchain with G-Cter in SUMO1); alternate linkage. Residue lysine 16 forms a Glycyl lysine isopeptide (Lys-Gly) (interchain with G-Cter in SUMO2); alternate linkage. Residues 63 to 66 (RKSN) form an interaction with DNA region. The C5-type zinc finger occupies 151 to 170 (CRVLLTHEIMCSRCCDKKSC). Interaction with DNA regions lie at residues 197-204 (NCLKNAGN) and 236-239 (NNSK). The 84-residue stretch at 255 to 338 (PCIKAISPSE…KGTPGRFIYT (84 aa)) folds into the IPT/TIG domain. A disordered region spans residues 450 to 473 (GFTRNSSSVSPHGYVPSTTPQQTN).

The protein belongs to the COE family. Homodimer. Interacts with ZNF423 and ZNF521, leading to prevent EBF1 to bind DNA and activate target genes. Interacts with CCR4-NOT component CNOT3. In terms of tissue distribution, expressed exclusively in olfactory receptor neurons and their precursors.

The protein localises to the nucleus. Its function is as follows. Key pioneer transcription factor of B-cell specification and commitment. Recognizes variations of the palindromic sequence 5'-ATTCCCNNGGGAATT-3'. Operates in a transcription factor network to activate B-cell-specific genes and repress genes associated with alternative cell fates. For instance, positively regulates many B-cell specific genes including BCR or CD40 while repressing genes that direct cells into alternative lineages, including GATA3 and TCF7 for the T-cell lineage. In addition to its role during lymphopoiesis, controls the thermogenic gene program in adipocytes during development and in response to environmental cold. The protein is Transcription factor COE1 (Ebf1) of Rattus norvegicus (Rat).